A 503-amino-acid polypeptide reads, in one-letter code: ATP synthase subunit alpha (503 aa).

Residue 169–176 (GDRKTGKT) participates in ATP binding.

The protein belongs to the ATPase alpha/beta chains family. F-type ATPases have 2 components, CF(1) - the catalytic core - and CF(0) - the membrane proton channel. CF(1) has five subunits: alpha(3), beta(3), gamma(1), delta(1), epsilon(1). CF(0) has three main subunits: a(1), b(2) and c(9-12). The alpha and beta chains form an alternating ring which encloses part of the gamma chain. CF(1) is attached to CF(0) by a central stalk formed by the gamma and epsilon chains, while a peripheral stalk is formed by the delta and b chains.

Its subcellular location is the cell membrane. The catalysed reaction is ATP + H2O + 4 H(+)(in) = ADP + phosphate + 5 H(+)(out). Its activity is regulated as follows. Increases 2-fold following exposure to low pH. Its function is as follows. Produces ATP from ADP in the presence of a proton gradient across the membrane. The alpha chain is a regulatory subunit. The protein is ATP synthase subunit alpha of Lactobacillus acidophilus (strain ATCC 700396 / NCK56 / N2 / NCFM).